Reading from the N-terminus, the 233-residue chain is Cytochrome c oxidase subunit 3 (233 aa).

4 helical membrane-spanning segments follow: residues 62–82 (VVLFLVAESAIFLGLFTAYLI), 98–118 (LELLLPGVNSIILISSSFVMH), 135–155 (WFGITAAMGIIFLAGQMYEYF), and 172–192 (VLTGFHGLHVTFGLLLILSVL).

The protein belongs to the cytochrome c oxidase subunit 3 family.

The protein resides in the cell membrane. The enzyme catalyses 4 Fe(II)-[cytochrome c] + O2 + 8 H(+)(in) = 4 Fe(III)-[cytochrome c] + 2 H2O + 4 H(+)(out). This is Cytochrome c oxidase subunit 3 (ctaE) from Synechocystis sp. (strain ATCC 27184 / PCC 6803 / Kazusa).